The sequence spans 764 residues: E3 ubiquitin-protein ligase CBL-B-B (764 aa).

Low complexity predominate over residues methionine 1–serine 19. Positions methionine 1–serine 27 are disordered. The tract at residues proline 48 to glutamine 180 is 4H. One can recognise a Cbl-PTB domain in the interval proline 48–aspartate 356. An EF-hand-like region spans residues glycine 181 to phenylalanine 253. Positions 234, 236, 238, 240, and 245 each coordinate Ca(2+). The tract at residues glutamine 254–aspartate 356 is SH2-like. Arginine 299 is a 4-O-phospho-L-tyrosine binding site. Positions leucine 357–leucine 385 are linker. Residues cysteine 386–arginine 425 form an RING-type zinc finger. Disordered stretches follow at residues methionine 482–cysteine 583 and lysine 707–proline 726. Residues arginine 485–leucine 498 are compositionally biased toward polar residues. Over residues leucine 556 to proline 578 the composition is skewed to pro residues.

Interacts with several SH3 domain-containing proteins and with poly-ubiquitinated proteins.

It localises to the cytoplasm. It catalyses the reaction S-ubiquitinyl-[E2 ubiquitin-conjugating enzyme]-L-cysteine + [acceptor protein]-L-lysine = [E2 ubiquitin-conjugating enzyme]-L-cysteine + N(6)-ubiquitinyl-[acceptor protein]-L-lysine.. It participates in protein modification; protein ubiquitination. In terms of biological role, E3 ubiquitin-protein ligase which accepts ubiquitin from specific E2 ubiquitin-conjugating enzymes, and transfers it to substrates, generally promoting their degradation by the proteasome. This is E3 ubiquitin-protein ligase CBL-B-B (cblb-b) from Xenopus laevis (African clawed frog).